The sequence spans 353 residues: Homeobox protein Mohawk (353 aa).

Residues 18–27 (RGTPDRERGS) show a composition bias toward basic and acidic residues. Residues 18–50 (RGTPDRERGSRTFSGFLDNPHTGPEVGIPDGPP) form a disordered region. Positions 71 to 132 (VRHKRQALQD…NARRRLKNTV (62 aa)) form a DNA-binding region, homeobox; TALE-type. Disordered stretches follow at residues 157-183 (LSVS…EEGY) and 243-302 (MGKT…PSKD).

This sequence belongs to the TALE/IRO homeobox family.

The protein resides in the nucleus. Functionally, may act as a morphogenetic regulator of cell adhesion. Participates in the early events that lead to differentiation. The protein is Homeobox protein Mohawk (Mkx) of Mus musculus (Mouse).